Consider the following 192-residue polypeptide: U1 small nuclear ribonucleoprotein C (192 aa).

The Matrin-type zinc-finger motif lies at 4 to 36; that stretch reads YYCEYCDIYLTHSSPVGRRQHNQGRKHISAKIE. The segment at 118-192 is disordered; sequence PGANKYPNNN…FVNKNSEQPN (75 aa). Residues 133-154 are compositionally biased toward polar residues; that stretch reads RISNTPKPYNNYTNKPITNSPY. Over residues 164 to 173 the composition is skewed to low complexity; it reads NNENSNNFSN. A compositionally biased stretch (polar residues) spans 174–192; the sequence is YQMNKDNSNFVNKNSEQPN.

The protein belongs to the U1 small nuclear ribonucleoprotein C family. U1 snRNP is composed of the 7 core Sm proteins B/B', D1, D2, D3, E, F and G that assemble in a heptameric protein ring on the Sm site of the small nuclear RNA to form the core snRNP, and at least 3 U1 snRNP-specific proteins U1-70K, U1-A and U1-C. U1-C interacts with U1 snRNA and the 5' splice-site region of the pre-mRNA.

Its subcellular location is the nucleus. Component of the spliceosomal U1 snRNP, which is essential for recognition of the pre-mRNA 5' splice-site and the subsequent assembly of the spliceosome. U1-C is directly involved in initial 5' splice-site recognition for both constitutive and regulated alternative splicing. The interaction with the 5' splice-site seems to precede base-pairing between the pre-mRNA and the U1 snRNA. Stimulates commitment or early (E) complex formation by stabilizing the base pairing of the 5' end of the U1 snRNA and the 5' splice-site region. This chain is U1 small nuclear ribonucleoprotein C, found in Plasmodium chabaudi chabaudi.